The sequence spans 302 residues: Deoxyhypusine hydroxylase (302 aa).

The residue at position 1 (M1) is an N-acetylmethionine. 5 HEAT-like PBS-type repeats span residues 54–80, 87–113, 175–201, 206–232, and 239–265; these read LKHE…VLQD, VRHE…YSTD, ERYR…GLKC, FRHE…TLAR, and VRHE…YITD. Fe cation is bound by residues H56, H89, and E90. H208, H241, and E242 together coordinate Fe cation.

The protein belongs to the deoxyhypusine hydroxylase family. Fe(2+) serves as cofactor.

The catalysed reaction is [eIF5A protein]-deoxyhypusine + AH2 + O2 = [eIF5A protein]-hypusine + A + H2O. Its pathway is protein modification; eIF5A hypusination. Catalyzes the hydroxylation of the N(6)-(4-aminobutyl)-L-lysine intermediate produced by deoxyhypusine synthase/DHPS on a critical lysine of the eukaryotic translation initiation factor 5A/eIF-5A. This is the second step of the post-translational modification of that lysine into an unusual amino acid residue named hypusine. Hypusination is unique to mature eIF-5A factor and is essential for its function. The protein is Deoxyhypusine hydroxylase (Dohh) of Rattus norvegicus (Rat).